Consider the following 225-residue polypeptide: Protein GrpE (225 aa).

2 disordered regions span residues 1-44 and 183-225; these read MTEE…ENAG and VAVA…PDEG.

The protein belongs to the GrpE family. Homodimer.

It localises to the cytoplasm. Functionally, participates actively in the response to hyperosmotic and heat shock by preventing the aggregation of stress-denatured proteins, in association with DnaK and GrpE. It is the nucleotide exchange factor for DnaK and may function as a thermosensor. Unfolded proteins bind initially to DnaJ; upon interaction with the DnaJ-bound protein, DnaK hydrolyzes its bound ATP, resulting in the formation of a stable complex. GrpE releases ADP from DnaK; ATP binding to DnaK triggers the release of the substrate protein, thus completing the reaction cycle. Several rounds of ATP-dependent interactions between DnaJ, DnaK and GrpE are required for fully efficient folding. The sequence is that of Protein GrpE from Streptomyces coelicolor (strain ATCC BAA-471 / A3(2) / M145).